A 303-amino-acid chain; its full sequence is tRNA pseudouridine synthase B (303 aa).

Asp-38 (nucleophile) is an active-site residue.

Belongs to the pseudouridine synthase TruB family. Type 1 subfamily.

The enzyme catalyses uridine(55) in tRNA = pseudouridine(55) in tRNA. Responsible for synthesis of pseudouridine from uracil-55 in the psi GC loop of transfer RNAs. In Levilactobacillus brevis (strain ATCC 367 / BCRC 12310 / CIP 105137 / JCM 1170 / LMG 11437 / NCIMB 947 / NCTC 947) (Lactobacillus brevis), this protein is tRNA pseudouridine synthase B.